The chain runs to 376 residues: Actin (376 aa).

The protein belongs to the actin family.

The protein resides in the cytoplasm. The protein localises to the cytoskeleton. It carries out the reaction ATP + H2O = ADP + phosphate + H(+). In terms of biological role, actins are highly conserved proteins that are involved in various types of cell motility and are ubiquitously expressed in all eukaryotic cells. In Trypanosoma cruzi, this protein is Actin.